A 183-amino-acid chain; its full sequence is Ribosome maturation factor RimM (183 aa).

Residues 103–183 (EEGDYYWKDL…SIEVDWDPGF (81 aa)) enclose the PRC barrel domain.

This sequence belongs to the RimM family. As to quaternary structure, binds ribosomal protein uS19.

It is found in the cytoplasm. An accessory protein needed during the final step in the assembly of 30S ribosomal subunit, possibly for assembly of the head region. Essential for efficient processing of 16S rRNA. May be needed both before and after RbfA during the maturation of 16S rRNA. It has affinity for free ribosomal 30S subunits but not for 70S ribosomes. This chain is Ribosome maturation factor RimM, found in Escherichia coli O157:H7 (strain EC4115 / EHEC).